We begin with the raw amino-acid sequence, 133 residues long: ATP synthase epsilon chain (133 aa).

The protein belongs to the ATPase epsilon chain family. F-type ATPases have 2 components, CF(1) - the catalytic core - and CF(0) - the membrane proton channel. CF(1) has five subunits: alpha(3), beta(3), gamma(1), delta(1), epsilon(1). CF(0) has three main subunits: a, b and c.

It localises to the cell inner membrane. Its function is as follows. Produces ATP from ADP in the presence of a proton gradient across the membrane. The sequence is that of ATP synthase epsilon chain from Maricaulis maris (strain MCS10) (Caulobacter maris).